The following is a 158-amino-acid chain: Deoxyuridine 5'-triphosphate nucleotidohydrolase (158 aa).

Substrate-binding positions include 75 to 77, N88, 92 to 94, and K102; these read RSG and TVD.

This sequence belongs to the dUTPase family. The cofactor is Mg(2+).

The enzyme catalyses dUTP + H2O = dUMP + diphosphate + H(+). It functions in the pathway pyrimidine metabolism; dUMP biosynthesis; dUMP from dCTP (dUTP route): step 2/2. Functionally, this enzyme is involved in nucleotide metabolism: it produces dUMP, the immediate precursor of thymidine nucleotides and it decreases the intracellular concentration of dUTP so that uracil cannot be incorporated into DNA. The protein is Deoxyuridine 5'-triphosphate nucleotidohydrolase of Bifidobacterium longum subsp. infantis (strain ATCC 15697 / DSM 20088 / JCM 1222 / NCTC 11817 / S12).